The sequence spans 151 residues: MTKRAPKSGPLSPSCSGGSSRNLELAVKSSEGARRSTRLRLQPLRKPKTSPKKKPVKLQTKMPKKPATAFFFFLDDFRKQYQEENPDVKSMREIGKTCGEKWKTMTYEEKVKYYDIATEKREEFHRAMTEYTKRMESGAHDESETDSDYSE.

Disordered stretches follow at residues 1–62 and 132–151; these read MTKR…QTKM and TKRM…DYSE. Low complexity predominate over residues 7 to 20; it reads KSGPLSPSCSGGSS. A compositionally biased stretch (basic residues) spans 35-56; the sequence is RSTRLRLQPLRKPKTSPKKKPV. A DNA-binding region (HMG box) is located at residues 63-132; sequence PKKPATAFFF…EFHRAMTEYT (70 aa). Basic and acidic residues predominate over residues 132–142; the sequence is TKRMESGAHDE. Serine 150 is modified (phosphoserine).

This sequence belongs to the HMGB family.

The protein localises to the nucleus. The chain is High mobility group B protein 14 (HMGB14) from Arabidopsis thaliana (Mouse-ear cress).